Reading from the N-terminus, the 143-residue chain is Large ribosomal subunit protein uL11 (143 aa).

The protein belongs to the universal ribosomal protein uL11 family. Part of the ribosomal stalk of the 50S ribosomal subunit. Interacts with L10 and the large rRNA to form the base of the stalk. L10 forms an elongated spine to which L12 dimers bind in a sequential fashion forming a multimeric L10(L12)X complex. In terms of processing, one or more lysine residues are methylated.

Forms part of the ribosomal stalk which helps the ribosome interact with GTP-bound translation factors. The polypeptide is Large ribosomal subunit protein uL11 (Kocuria rhizophila (strain ATCC 9341 / DSM 348 / NBRC 103217 / DC2201)).